The chain runs to 222 residues: Tegument protein UL26 (222 aa).

The protein belongs to the herpesviridae US22 family. Interacts with UL25. Interacts with ISGylation machinery components ISG15, UBA7 and HERC5; these interactions inhibit global protein ISGylation. In terms of processing, ISGylated; ISGylation regulates UL26 stability and inhibits its activities to suppress NF-kappa-B signaling.

The protein localises to the virion tegument. Its subcellular location is the host nucleus. In terms of biological role, plays a role in the inhibition of host NF-kappa-B. This inhibition affects both the canonical and the non-canonical pathways. Blocks the induction of host IKK phosphorylation. May also influence the normal phosphorylation state of several tegument proteins including pp28 in virions. Also suppresses virus-induced ISGylation independent of its own ISGylation. In Homo sapiens (Human), this protein is Tegument protein UL26 (UL26).